The following is a 698-amino-acid chain: eEF1A lysine and N-terminal methyltransferase (698 aa).

Methionine 1 is subject to N-acetylmethionine. Phosphoserine is present on serine 267. The tract at residues lysine 431–proline 461 is disordered. Over residues arginine 436–glutamine 448 the composition is skewed to basic residues.

It belongs to the methyltransferase superfamily. Forms a tripartite complex containing GAB1, METTL13 and SPRY2. Within the complex interacts with GAB1 and SPRY2. In terms of tissue distribution, expressed in the inner ear (at protein level). Expression is detected in the cochlear duct, spiral limbus region, efferent and afferent nerves, and in spiral ganglion neurons (at protein level).

The protein localises to the cytoplasm. It localises to the nucleus. It is found in the mitochondrion. The enzyme catalyses L-lysyl-[protein] + S-adenosyl-L-methionine = N(6)-methyl-L-lysyl-[protein] + S-adenosyl-L-homocysteine + H(+). It catalyses the reaction N(6)-methyl-L-lysyl-[protein] + S-adenosyl-L-methionine = N(6),N(6)-dimethyl-L-lysyl-[protein] + S-adenosyl-L-homocysteine + H(+). It carries out the reaction N-terminal glycyl-L-lysyl-L-glutamyl-[protein] + 3 S-adenosyl-L-methionine = N-terminal N,N,N-trimethyl-glycyl-L-lysyl-L-glutamyl-[protein] + 3 S-adenosyl-L-homocysteine + 3 H(+). Its function is as follows. Dual methyltransferase that catalyzes methylation of elongation factor 1-alpha (EEF1A1 and EEF1A2) at two different positions, and is therefore involved in the regulation of mRNA translation. Via its C-terminus, methylates EEF1A1 and EEF1A2 at the N-terminal residue 'Gly-2'. Via its N-terminus dimethylates EEF1A1 and EEF1A2 at residue 'Lys-55'. Has no activity towards core histones H2A, H2B, H3 and H4. This Mus musculus (Mouse) protein is eEF1A lysine and N-terminal methyltransferase.